Consider the following 305-residue polypeptide: Ornithine carbamoyltransferase (305 aa).

Residues 52–55 (STRT), Gln-79, Arg-103, and 130–133 (HPCQ) contribute to the carbamoyl phosphate site. L-ornithine contacts are provided by residues Asn-161, Asp-222, and 226–227 (SM). Carbamoyl phosphate is bound by residues 262-263 (CL) and Arg-290.

This sequence belongs to the aspartate/ornithine carbamoyltransferase superfamily. OTCase family.

The protein resides in the cytoplasm. The catalysed reaction is carbamoyl phosphate + L-ornithine = L-citrulline + phosphate + H(+). It participates in amino-acid biosynthesis; L-arginine biosynthesis; L-arginine from L-ornithine and carbamoyl phosphate: step 1/3. Reversibly catalyzes the transfer of the carbamoyl group from carbamoyl phosphate (CP) to the N(epsilon) atom of ornithine (ORN) to produce L-citrulline. The polypeptide is Ornithine carbamoyltransferase (Pelobacter propionicus (strain DSM 2379 / NBRC 103807 / OttBd1)).